The primary structure comprises 452 residues: UDP-N-acetylmuramoylalanine--D-glutamate ligase (452 aa).

115–121 (GTNGKTT) lines the ATP pocket.

Belongs to the MurCDEF family.

It is found in the cytoplasm. The enzyme catalyses UDP-N-acetyl-alpha-D-muramoyl-L-alanine + D-glutamate + ATP = UDP-N-acetyl-alpha-D-muramoyl-L-alanyl-D-glutamate + ADP + phosphate + H(+). Its pathway is cell wall biogenesis; peptidoglycan biosynthesis. Its function is as follows. Cell wall formation. Catalyzes the addition of glutamate to the nucleotide precursor UDP-N-acetylmuramoyl-L-alanine (UMA). In Citrifermentans bemidjiense (strain ATCC BAA-1014 / DSM 16622 / JCM 12645 / Bem) (Geobacter bemidjiensis), this protein is UDP-N-acetylmuramoylalanine--D-glutamate ligase.